The sequence spans 396 residues: Period circadian protein (396 aa).

Disordered regions lie at residues 27-120 (VTAP…APPV), 167-188 (SGPG…WEGE), 253-275 (GGNG…QYTQ), and 333-362 (SPSS…TSQA). A compositionally biased stretch (gly residues) spans 93–114 (GTSGTGNSGDGGGGGGANGTGS). Gly residues predominate over residues 253 to 262 (GGNGNVGSGN). Residues 333 to 342 (SPSSTNTNPN) show a composition bias toward low complexity.

Forms a heterodimer with timeless (TIM); the complex then translocates into the nucleus. Phosphorylated with a circadian rhythmicity, probably by the double-time protein (dbt). Phosphorylation could be implicated in the stability of per monomer and in the formation of heterodimer per-tim.

Its subcellular location is the nucleus. The protein localises to the cytoplasm. The protein resides in the perinuclear region. Its function is as follows. Essential for biological clock functions. Determines the period length of circadian and ultradian rhythms; an increase in PER dosage leads to shortened circadian rhythms and a decrease leads to lengthened circadian rhythms. Essential for the circadian rhythmicity of locomotor activity, eclosion behavior, and for the rhythmic component of the male courtship song that originates in the thoracic nervous system. The biological cycle depends on the rhythmic formation and nuclear localization of the TIM-PER complex. Light induces the degradation of TIM, which promotes elimination of PER. Nuclear activity of the heterodimer coordinatively regulates PER and TIM transcription through a negative feedback loop. Behaves as a negative element in circadian transcriptional loop. Does not appear to bind DNA, suggesting indirect transcriptional inhibition. The protein is Period circadian protein (per) of Drosophila paulistorum (Fruit fly).